An 881-amino-acid chain; its full sequence is Alanine--tRNA ligase (881 aa).

Residues His-566, His-570, Cys-668, and His-672 each coordinate Zn(2+).

The protein belongs to the class-II aminoacyl-tRNA synthetase family. It depends on Zn(2+) as a cofactor.

The protein resides in the cytoplasm. It carries out the reaction tRNA(Ala) + L-alanine + ATP = L-alanyl-tRNA(Ala) + AMP + diphosphate. Functionally, catalyzes the attachment of alanine to tRNA(Ala) in a two-step reaction: alanine is first activated by ATP to form Ala-AMP and then transferred to the acceptor end of tRNA(Ala). Also edits incorrectly charged Ser-tRNA(Ala) and Gly-tRNA(Ala) via its editing domain. The protein is Alanine--tRNA ligase of Frankia alni (strain DSM 45986 / CECT 9034 / ACN14a).